We begin with the raw amino-acid sequence, 418 residues long: D-inositol 3-phosphate glycosyltransferase (418 aa).

His-9 contributes to the 1D-myo-inositol 3-phosphate binding site. UDP-N-acetyl-alpha-D-glucosamine is bound by residues 15 to 16 (QP) and Gly-23. 1D-myo-inositol 3-phosphate contacts are provided by residues 20–25 (DSGGMN), Lys-78, Tyr-110, Thr-134, and Arg-154. Arg-231, Lys-236, and Arg-294 together coordinate UDP-N-acetyl-alpha-D-glucosamine. Positions 303, 304, and 306 each coordinate Mg(2+). Glu-316 and Glu-324 together coordinate UDP-N-acetyl-alpha-D-glucosamine. Thr-330 provides a ligand contact to Mg(2+).

It belongs to the glycosyltransferase group 1 family. MshA subfamily. In terms of assembly, homodimer.

The enzyme catalyses 1D-myo-inositol 3-phosphate + UDP-N-acetyl-alpha-D-glucosamine = 1D-myo-inositol 2-acetamido-2-deoxy-alpha-D-glucopyranoside 3-phosphate + UDP + H(+). Its function is as follows. Catalyzes the transfer of a N-acetyl-glucosamine moiety to 1D-myo-inositol 3-phosphate to produce 1D-myo-inositol 2-acetamido-2-deoxy-glucopyranoside 3-phosphate in the mycothiol biosynthesis pathway. This Corynebacterium glutamicum (strain R) protein is D-inositol 3-phosphate glycosyltransferase.